Here is a 368-residue protein sequence, read N- to C-terminus: Homoserine O-acetyltransferase (368 aa).

An AB hydrolase-1 domain is found at 43–346; that stretch reads ILLEHALTGT…EYGHDAFLVE (304 aa). Catalysis depends on Ser145, which acts as the Nucleophile. Substrate is bound at residue Arg212. Catalysis depends on residues Asp307 and His340. Asp341 is a binding site for substrate.

Belongs to the AB hydrolase superfamily. MetX family. As to quaternary structure, homodimer.

It localises to the cytoplasm. The catalysed reaction is L-homoserine + acetyl-CoA = O-acetyl-L-homoserine + CoA. Its pathway is amino-acid biosynthesis; L-methionine biosynthesis via de novo pathway; O-acetyl-L-homoserine from L-homoserine: step 1/1. Its function is as follows. Transfers an acetyl group from acetyl-CoA to L-homoserine, forming acetyl-L-homoserine. The sequence is that of Homoserine O-acetyltransferase from Listeria monocytogenes serovar 1/2a (strain ATCC BAA-679 / EGD-e).